Here is a 455-residue protein sequence, read N- to C-terminus: Nucleolar protein 12 (455 aa).

2 disordered regions span residues 1 to 104 (MSSF…ENEN) and 117 to 142 (QNEEQDESKESSEAKSSKVAEERTKA). Residues 24-37 (NTRDGPVSKDELVK) show a composition bias toward basic and acidic residues. Over residues 51 to 66 (PKQQTNENESTLNQSA) the composition is skewed to polar residues. Positions 68 to 91 (ESDEEEEEYNDESNEGDDSDDAEQ) are enriched in acidic residues. Basic and acidic residues predominate over residues 124–141 (SKESSEAKSSKVAEERTK). RRM domains are found at residues 160-258 (RTVF…HVSH) and 266-351 (RTIF…RAKS). 2 disordered regions span residues 333–402 (LETG…RSTV) and 420–455 (AIKGIKGSKKGKKVKKPRIRERSTKFKEERKTMNKV). Basic residues predominate over residues 339–348 (KKGRKLRISR). The segment covering 349 to 363 (AKSNAKPSLMSPNHF) has biased composition (polar residues). Basic residues predominate over residues 425–438 (KGSKKGKKVKKPRI). Residues 439-455 (RERSTKFKEERKTMNKV) are compositionally biased toward basic and acidic residues.

It belongs to the RRM RBM34 family.

It localises to the nucleus. The protein localises to the nucleolus. Involved in pre-25S rRNA processing. This chain is Nucleolar protein 12 (NOP12), found in Candida albicans (strain SC5314 / ATCC MYA-2876) (Yeast).